A 717-amino-acid polypeptide reads, in one-letter code: Polyribonucleotide nucleotidyltransferase (717 aa).

Mg(2+)-binding residues include aspartate 487 and aspartate 493. Residues 554–613 (PRITVINVPKDKIRDVIGTGGKVIREIVEYSGCKIDIEDDGTIKIAATSDEQAQKAIDRI) form the KH domain. The S1 motif domain maps to 623-691 (GQIYTGKVVK…DRGKVKLSMR (69 aa)).

Belongs to the polyribonucleotide nucleotidyltransferase family. Requires Mg(2+) as cofactor.

The protein resides in the cytoplasm. The catalysed reaction is RNA(n+1) + phosphate = RNA(n) + a ribonucleoside 5'-diphosphate. Functionally, involved in mRNA degradation. Catalyzes the phosphorolysis of single-stranded polyribonucleotides processively in the 3'- to 5'-direction. This Acidiphilium cryptum (strain JF-5) protein is Polyribonucleotide nucleotidyltransferase.